A 422-amino-acid chain; its full sequence is Probable protein phosphatase 2C 43 (422 aa).

A PPM-type phosphatase domain is found at serine 117–phenylalanine 393. 4 residues coordinate Mn(2+): aspartate 163, glycine 164, aspartate 341, and aspartate 384.

This sequence belongs to the PP2C family. It depends on Mg(2+) as a cofactor. Requires Mn(2+) as cofactor.

The enzyme catalyses O-phospho-L-seryl-[protein] + H2O = L-seryl-[protein] + phosphate. It carries out the reaction O-phospho-L-threonyl-[protein] + H2O = L-threonyl-[protein] + phosphate. This is Probable protein phosphatase 2C 43 from Arabidopsis thaliana (Mouse-ear cress).